A 327-amino-acid chain; its full sequence is GTPase Obg (327 aa).

Positions Met1–Leu159 constitute an Obg domain. The OBG-type G domain maps to Ala160–Ile327. ATP contacts are provided by residues Gly166–Ser173, Phe191–Ile195, Asp213–Gly216, Asn280–Glu283, and Ser309–Ser311. 2 residues coordinate Mg(2+): Ser173 and Thr193.

Belongs to the TRAFAC class OBG-HflX-like GTPase superfamily. OBG GTPase family. As to quaternary structure, monomer. The cofactor is Mg(2+).

The protein localises to the cytoplasm. In terms of biological role, an essential GTPase which binds GTP, GDP and possibly (p)ppGpp with moderate affinity, with high nucleotide exchange rates and a fairly low GTP hydrolysis rate. Plays a role in control of the cell cycle, stress response, ribosome biogenesis and in those bacteria that undergo differentiation, in morphogenesis control. The protein is GTPase Obg of Prochlorococcus marinus subsp. pastoris (strain CCMP1986 / NIES-2087 / MED4).